We begin with the raw amino-acid sequence, 417 residues long: COP9 signalosome complex subunit 7a (417 aa).

The PCI domain occupies 2–179 (EQTKALNALE…EMVQINSVAA (178 aa)). The interval 240–417 (DEQKGAVPSS…KRGSKRKLTA (178 aa)) is disordered. The segment covering 263 to 290 (RGGGGGGDGAGAGGSFRGSGYSRGGGLS) has biased composition (gly residues). Low complexity-rich tracts occupy residues 291 to 311 (QGYRSSQRGSHQQHQNQSRQQ), 320 to 330 (SNQSGTNSLLT), and 343 to 352 (PSAVSPSAAA). The span at 367 to 379 (METGSGSGSGPLG) shows a compositional bias: gly residues. The span at 385 to 405 (DMDDSEEDIDDDTMDLDDEGD) shows a compositional bias: acidic residues.

Belongs to the CSN7/EIF3M family. CSN7 subfamily. In terms of assembly, component of the COP9 signalosome (CSN) complex.

Its subcellular location is the cytoplasm. It is found in the nucleus. Component of the COP9 signalosome (CSN) complex that acts as an regulator of the ubiquitin (Ubl) conjugation pathway by mediating the deneddylation of the cullin subunit of SCF-type E3 ubiquitin-protein ligase complexes. The CSN complex is involved in the regulation of the circadian clock through its control of the stability of the SCF(FWD1) complex. This chain is COP9 signalosome complex subunit 7a (csn-7a), found in Neurospora crassa (strain ATCC 24698 / 74-OR23-1A / CBS 708.71 / DSM 1257 / FGSC 987).